The primary structure comprises 926 residues: Rap guanine nucleotide exchange factor 3 (926 aa).

Serine 79 is subject to Phosphoserine. The region spanning 110-186 is the DEP domain; sequence ATYPTLIRDR…RDAQFYRFPG (77 aa). An interaction with PDE3B region spans residues 218 to 242; the sequence is TVALRKSPGQRTDEELDLIFEELVH. Residues 311–314 and 321–322 each bind 3',5'-cyclic AMP; these read GQLA and RA. Residues 369–388 are disordered; it reads TSQGAGPSRPPTPGRNRYTV. Positions 384–521 constitute an N-terminal Ras-GEF domain; it reads NRYTVMSGTP…EQYPERRRHH (138 aa). Positions 398-422 are interaction with PDE3B; sequence ELLLEAMRPDSSAHDPTETFLSDFL. Residues serine 531 and serine 867 each carry the phosphoserine modification. The Ras-GEF domain occupies 665–892; the sequence is SAKDLAGQLT…SRISTCSEQS (228 aa).

In terms of assembly, interacts with PDE3B and PIK3R6; form a signaling complex that regulates phosphatidylinositol 3-kinase gamma in angiogenesis. In terms of tissue distribution, expressed at low levels in adult brain. Strongly expressed in parts of the neonatal brain, including the septum and the thalamus.

Its subcellular location is the cytoplasm. The protein resides in the membrane. Guanine nucleotide exchange factor (GEF) for RAP1A and RAP2A small GTPases that is activated by binding cAMP. Through simultaneous binding of PDE3B to RAPGEF3 and PIK3R6 is assembled in a signaling complex in which it activates the PI3K gamma complex and which is involved in angiogenesis. Plays a role in the modulation of the cAMP-induced dynamic control of endothelial barrier function through a pathway that is independent on Rho-mediated signaling. Required for the actin rearrangement at cell-cell junctions, such as stress fibers and junctional actin. This is Rap guanine nucleotide exchange factor 3 (Rapgef3) from Rattus norvegicus (Rat).